Reading from the N-terminus, the 937-residue chain is Bifunctional glutamine synthetase adenylyltransferase/adenylyl-removing enzyme (937 aa).

The adenylyl removase stretch occupies residues 1-436 (MSQPIPSASP…AAEFAELLAP (436 aa)). An adenylyl transferase region spans residues 443 to 937 (PDTLADYWRA…QLRFQPGKGA (495 aa)).

Belongs to the GlnE family. It depends on Mg(2+) as a cofactor.

The enzyme catalyses [glutamine synthetase]-O(4)-(5'-adenylyl)-L-tyrosine + phosphate = [glutamine synthetase]-L-tyrosine + ADP. The catalysed reaction is [glutamine synthetase]-L-tyrosine + ATP = [glutamine synthetase]-O(4)-(5'-adenylyl)-L-tyrosine + diphosphate. Functionally, involved in the regulation of glutamine synthetase GlnA, a key enzyme in the process to assimilate ammonia. When cellular nitrogen levels are high, the C-terminal adenylyl transferase (AT) inactivates GlnA by covalent transfer of an adenylyl group from ATP to specific tyrosine residue of GlnA, thus reducing its activity. Conversely, when nitrogen levels are low, the N-terminal adenylyl removase (AR) activates GlnA by removing the adenylyl group by phosphorolysis, increasing its activity. The regulatory region of GlnE binds the signal transduction protein PII (GlnB) which indicates the nitrogen status of the cell. This is Bifunctional glutamine synthetase adenylyltransferase/adenylyl-removing enzyme from Xanthomonas campestris pv. campestris (strain ATCC 33913 / DSM 3586 / NCPPB 528 / LMG 568 / P 25).